A 522-amino-acid polypeptide reads, in one-letter code: Zinc finger and BTB domain-containing protein 18 (522 aa).

The region spanning 24-91 (CDCTVLVGDA…MYEGKLQFKD (68 aa)) is the BTB domain. The segment covering 121–143 (ATTEADSTKKEEDASSCSDKVES) has biased composition (basic and acidic residues). Residues 121–166 (ATTEADSTKKEEDASSCSDKVESLSDGSSHMAGDLPSDEDEGEDDK) form a disordered region. The residue at position 157 (serine 157) is a Phosphoserine. Residue lysine 273 forms a Glycyl lysine isopeptide (Lys-Gly) (interchain with G-Cter in SUMO2) linkage. The interval 310-427 (EPAHLAPLRE…TFSCMYTLKR (118 aa)) is interaction with DNMT3A. 4 C2H2-type zinc fingers span residues 370–392 (FMCP…LSTH), 410–432 (PTCS…ERTH), 438–460 (YTCT…AVVH), and 466–489 (HACK…RKFH). Serine 516 and serine 517 each carry phosphoserine.

This sequence belongs to the krueppel C2H2-type zinc-finger protein family. ZBTB18 subfamily. Interacts with DNMT3A.

Its subcellular location is the nucleus. In terms of biological role, transcriptional repressor that plays a role in various developmental processes such as myogenesis and brain development. Specifically binds the consensus DNA sequence 5'-[AC]ACATCTG[GT][AC]-3' which contains the E box core, and acts by recruiting chromatin remodeling multiprotein complexes. Plays a key role in myogenesis by directly repressing the expression of ID2 and ID3, 2 inhibitors of skeletal myogenesis. Also involved in controlling cell division of progenitor cells and regulating the survival of postmitotic cortical neurons. May also play a role in the organization of chromosomes in the nucleus. The polypeptide is Zinc finger and BTB domain-containing protein 18 (Zbtb18) (Rattus norvegicus (Rat)).